The chain runs to 85 residues: Polcalcin Bet v 4 (85 aa).

EF-hand domains follow at residues 7-42 and 42-77; these read QDKA…LGSI and ITPD…NRGL. Ca(2+) is bound by residues Asp20, Asn22, Asp24, Lys26, Glu31, Asp55, Asp57, Asp59, and Glu66.

Monomer.

The polypeptide is Polcalcin Bet v 4 (BETV4) (Betula pendula (European white birch)).